The sequence spans 147 residues: UPF0735 ACT domain-containing protein Cthe_1377 (147 aa).

In terms of domain architecture, ACT spans 71-146; that stretch reads TLFFTVEDYA…GVKRQEILAR (76 aa).

It belongs to the UPF0735 family.

The chain is UPF0735 ACT domain-containing protein Cthe_1377 from Acetivibrio thermocellus (strain ATCC 27405 / DSM 1237 / JCM 9322 / NBRC 103400 / NCIMB 10682 / NRRL B-4536 / VPI 7372) (Clostridium thermocellum).